The chain runs to 486 residues: Histamine H1 receptor (486 aa).

At 1-29 (MSFANTSSTFEDKMCEGNRTAMASPQLLP) the chain is on the extracellular side. N-linked (GlcNAc...) asparagine glycosylation is found at asparagine 5 and asparagine 18. Residues 30–50 (LVVVLSSISLVTVGLNLLVLY) form a helical membrane-spanning segment. Topologically, residues 51–64 (AVHSERKLHTVGNL) are cytoplasmic. The chain crosses the membrane as a helical span at residues 65–89 (YIVSLSVADLIVGAVVMPMNILYLI). Over 90-97 (MTKWSLGR) the chain is Extracellular. The helical transmembrane segment at 98–123 (PLCLFWLSMDYVASTASIFSVFILCI) threads the bilayer. Residues cysteine 100 and cysteine 180 are joined by a disulfide bond. Positions 107 and 112 each coordinate histamine. The segment at 107–112 (DYVAST) is important for agonist binding. The Cytoplasmic segment spans residues 124–144 (DRYRSVQQPLRYLRYRTKTRA). Phosphothreonine is present on residues threonine 140 and threonine 142. The helical transmembrane segment at 145–164 (SATILGAWFFSFLWVIPILG) threads the bilayer. The Extracellular segment spans residues 165-188 (WHHFMPPAPELREDKCETDFYNVT). Residues 189–211 (WFKIMTAIINFYLPTLLMLWFYV) traverse the membrane as a helical segment. Asparagine 198 lines the histamine pocket. Topologically, residues 212 to 415 (KIYKAVRRHC…LNRERKAAKQ (204 aa)) are cytoplasmic. Position 230 is a phosphoserine (serine 230). Residues 241–253 (SDDTKEGAKKPGR) show a composition bias toward basic and acidic residues. Disordered regions lie at residues 241-295 (SDDT…GERE) and 310-379 (VAEG…RSGS). 2 positions are modified to phosphoserine: serine 342 and serine 345. Positions 347–365 (DQTLVDQQSFSRTTDSDTS) are enriched in polar residues. Phosphoserine is present on residues serine 379, serine 381, serine 395, and serine 397. The chain crosses the membrane as a helical span at residues 416–439 (LGFIMAAFILCWIPYFIFFMVIAF). Positions 423–427 (FILCW) are important for agonist binding. Tyrosine 430 contributes to the histamine binding site. Residues cysteine 440 and cysteine 443 are joined by a disulfide bond. Topologically, residues 440-445 (CKSCCS) are extracellular. Residues 446-468 (EPMHMFTIWLGYINSTLNPLIYP) traverse the membrane as a helical segment. Residues 469 to 486 (LCNENFKKTFKKILHIRS) lie on the Cytoplasmic side of the membrane.

This sequence belongs to the G-protein coupled receptor 1 family. Post-translationally, phosphorylation at sites in the second and third cytoplasmic loops independently contribute to agonist-induced receptor down-regulation.

The protein localises to the cell membrane. In terms of biological role, G-protein-coupled receptor for histamine, a biogenic amine that functions as an immune modulator and a neurotransmitter. Through the H1 receptor, histamine mediates the contraction of smooth muscles and increases capillary permeability due to contraction of terminal venules. Also mediates neurotransmission in the central nervous system and thereby regulates circadian rhythms, emotional and locomotor activities as well as cognitive functions. The sequence is that of Histamine H1 receptor from Rattus norvegicus (Rat).